A 36-amino-acid chain; its full sequence is uncharacterized protein (36 aa).

This is an uncharacterized protein from Enterobacteria phage T4 (Bacteriophage T4).